The sequence spans 330 residues: MQNSVIEFLKPRLVDIEQITETRAKVTLEPLERGFGHTLGNALRRILLSSMPGYAITEVEIDGVLHEYSTKEGIQEDVLEILLNLKKLAIRIEGKDSVTLTLKKSGIGPVIANDILYDSNSVKIVTPNHIICHITDKNTSISMSIKVQRGRGYVPASSRFHSESDILPIGRLLLDACYSPVERISYNVEAARVEQRTDLDKLIIDMETDGTIEPEEAIRRAATILSEQLEAFIDLRDIHQPEHKEEKPEFDPILLRLVDDLELTVRSANCLKAESIHYIGDLVQRTEIELLKTPNLGKKSLTEIKDVLASRGLSLGTRLENWPPTNILDN.

An alpha N-terminal domain (alpha-NTD) region spans residues M1–R236. Residues F250 to N330 form an alpha C-terminal domain (alpha-CTD) region.

Belongs to the RNA polymerase alpha chain family. In terms of assembly, homodimer. The RNAP catalytic core consists of 2 alpha, 1 beta, 1 beta' and 1 omega subunit. When a sigma factor is associated with the core the holoenzyme is formed, which can initiate transcription.

The enzyme catalyses RNA(n) + a ribonucleoside 5'-triphosphate = RNA(n+1) + diphosphate. In terms of biological role, DNA-dependent RNA polymerase catalyzes the transcription of DNA into RNA using the four ribonucleoside triphosphates as substrates. This Blochmanniella pennsylvanica (strain BPEN) protein is DNA-directed RNA polymerase subunit alpha.